The following is a 348-amino-acid chain: Ferrochelatase (348 aa).

Fe cation-binding residues include His-218 and Glu-299.

The protein belongs to the ferrochelatase family.

Its subcellular location is the cytoplasm. It carries out the reaction heme b + 2 H(+) = protoporphyrin IX + Fe(2+). It participates in porphyrin-containing compound metabolism; protoheme biosynthesis; protoheme from protoporphyrin-IX: step 1/1. Functionally, catalyzes the ferrous insertion into protoporphyrin IX. The polypeptide is Ferrochelatase (Methylocella silvestris (strain DSM 15510 / CIP 108128 / LMG 27833 / NCIMB 13906 / BL2)).